We begin with the raw amino-acid sequence, 1603 residues long: GATOR1 complex protein DEPDC5 (1603 aa).

3 disordered regions span residues 427 to 450, 484 to 527, and 696 to 720; these read GKKP…KESE, VRER…SSLG, and LSNS…VSTS. Residues 430-439 show a composition bias toward basic and acidic residues; sequence PASEKAKNGR. Residues 494–508 show a composition bias toward low complexity; sequence SASSCDVSSSPSLPS. A Phosphoserine modification is found at Ser-505. 2 stretches are compositionally biased toward polar residues: residues 518-527 and 696-707; these read SQASDDSSLG and LSNSGAGMNPRT. A Phosphoserine; by PIM1 modification is found at Ser-1002. Residues 1135 to 1153 show a composition bias toward polar residues; sequence DRGNSQTFGNSQNIGEQGY. The disordered stretch occupies residues 1135 to 1165; the sequence is DRGNSQTFGNSQNIGEQGYSSTNSSDSSSQQ. Residues 1154-1165 show a composition bias toward low complexity; it reads SSTNSSDSSSQQ. Positions 1187–1262 constitute a DEP domain; that stretch reads PSTGVQLLSE…YGFYFYKIVT (76 aa). Phosphoserine; by PKB/AKT1 and PIM1 is present on Ser-1530.

Belongs to the IML1 family. As to quaternary structure, within the GATOR complex, component of the GATOR1 subcomplex, made of DEPDC5, NPRL2 and NPRL3. GATOR1 mediates the strong interaction of the GATOR complex with small GTPases Rag (RagA/RRAGA, RagB/RRAGB, RagC/RRAGC and/or RagD/RRAGD) heterodimers. Interacts with SAMTOR; interaction is direct and takes place in presence of methionine, leading to inhibit the activity of the GATOR1 complex. Post-translationally, phosphorylation at Ser-1002 and Ser-1530 by AKT1 and PIM1 inhibit the activity of DEPDC5, releasing inhibition of the mTORC1 pathway. In terms of processing, ubiquitinated. Amino acid-induced 'Lys-48'-linked polyubiquitination of DEPDC5 by the BCR(KLHL22) ubiquitin ligase complex leads to DEPDC5 proteasomal degradation and inhibition of the GATOR1 complex. Ubiquitination may occur at multiple lysines. As to expression, expressed in developing and adult brain.

Its subcellular location is the lysosome membrane. The protein resides in the cytoplasm. The protein localises to the cytosol. It localises to the perinuclear region. Its function is as follows. As a component of the GATOR1 complex functions as an inhibitor of the amino acid-sensing branch of the mTORC1 pathway. In response to amino acid depletion, the GATOR1 complex has GTPase activating protein (GAP) activity and strongly increases GTP hydrolysis by RagA/RRAGA (or RagB/RRAGB) within heterodimeric Rag complexes, thereby turning them into their inactive GDP-bound form, releasing mTORC1 from lysosomal surface and inhibiting mTORC1 signaling. In the presence of abundant amino acids, the GATOR1 complex is negatively regulated by GATOR2, the other GATOR subcomplex, in this amino acid-sensing branch of the TORC1 pathway. Within the GATOR1 complex, DEPDC5 mediates direct interaction with the nucleotide-binding pocket of small GTPases Rag (RagA/RRAGA, RagB/RRAGB, RagC/RRAGC and/or RagD/RRAGD) and coordinates their nucleotide loading states by promoting RagA/RRAGA or RagB/RRAGB into their GDP-binding state and RagC/RRAGC or RagD/RRAGD into their GTP-binding state. However, it does not execute the GAP activity, which is mediated by NPRL2. In Homo sapiens (Human), this protein is GATOR1 complex protein DEPDC5.